The primary structure comprises 344 residues: GTPase Obg (344 aa).

The Obg domain occupies 1-159 (MKFLDLAKVY…RTIWLRLKLI (159 aa)). An OBG-type G domain is found at 160–327 (ADVGLLGLPN…VLRALRARID (168 aa)). Residues 166–173 (GLPNAGKS), 191–195 (FTTLH), 212–215 (DIPG), 279–282 (NKID), and 308–310 (SGA) contribute to the GTP site. Mg(2+) contacts are provided by serine 173 and threonine 193.

The protein belongs to the TRAFAC class OBG-HflX-like GTPase superfamily. OBG GTPase family. Monomer. Requires Mg(2+) as cofactor.

Its subcellular location is the cytoplasm. In terms of biological role, an essential GTPase which binds GTP, GDP and possibly (p)ppGpp with moderate affinity, with high nucleotide exchange rates and a fairly low GTP hydrolysis rate. Plays a role in control of the cell cycle, stress response, ribosome biogenesis and in those bacteria that undergo differentiation, in morphogenesis control. The chain is GTPase Obg from Ruegeria pomeroyi (strain ATCC 700808 / DSM 15171 / DSS-3) (Silicibacter pomeroyi).